The chain runs to 481 residues: tRNA-2-methylthio-N(6)-dimethylallyladenosine synthase (481 aa).

One can recognise an MTTase N-terminal domain in the interval 24-140 (RKLFIESYGC…LPNLINEVEE (117 aa)). C33, C69, C103, C178, C182, and C185 together coordinate [4Fe-4S] cluster. The Radical SAM core domain occupies 164–410 (QSNGVSAFVS…VDLQQKHSKQ (247 aa)). The region spanning 413 to 476 (NSVIGTTVEV…SATLIGEPIG (64 aa)) is the TRAM domain.

Belongs to the methylthiotransferase family. MiaB subfamily. In terms of assembly, monomer. [4Fe-4S] cluster serves as cofactor.

It localises to the cytoplasm. It carries out the reaction N(6)-dimethylallyladenosine(37) in tRNA + (sulfur carrier)-SH + AH2 + 2 S-adenosyl-L-methionine = 2-methylsulfanyl-N(6)-dimethylallyladenosine(37) in tRNA + (sulfur carrier)-H + 5'-deoxyadenosine + L-methionine + A + S-adenosyl-L-homocysteine + 2 H(+). Catalyzes the methylthiolation of N6-(dimethylallyl)adenosine (i(6)A), leading to the formation of 2-methylthio-N6-(dimethylallyl)adenosine (ms(2)i(6)A) at position 37 in tRNAs that read codons beginning with uridine. This Christiangramia forsetii (strain DSM 17595 / CGMCC 1.15422 / KT0803) (Gramella forsetii) protein is tRNA-2-methylthio-N(6)-dimethylallyladenosine synthase.